Here is a 226-residue protein sequence, read N- to C-terminus: Probable N-acetyl-alpha-D-glucosaminyl L-malate deacetylase 2 (226 aa).

Residues H13, D16, and H127 each contribute to the Zn(2+) site.

The protein belongs to the PIGL family. The cofactor is Zn(2+).

The catalysed reaction is (S)-malyl N-acetyl-alpha-D-glucosaminide + H2O = (S)-malyl alpha-D-glucosaminide + acetate. In terms of biological role, involved in bacillithiol (BSH) biosynthesis. Catalyzes the second step of the pathway, the deacetylation of N-acetylglucosaminylmalate (GlcNAc-Mal) to glucosamine malate (GlcN-Mal). Could also be involved in bacillithiol-detoxifying pathways through formation of S-mercapturic adducts. In Bacillus anthracis, this protein is Probable N-acetyl-alpha-D-glucosaminyl L-malate deacetylase 2.